Consider the following 397-residue polypeptide: Putative 8-amino-7-oxononanoate synthase (397 aa).

Residue Arg22 coordinates substrate. Residue 109 to 110 (GW) coordinates pyridoxal 5'-phosphate. His139 lines the substrate pocket. Pyridoxal 5'-phosphate-binding positions include Ser187, 212–215 (DEAH), and 241–244 (TFSK). At Lys244 the chain carries N6-(pyridoxal phosphate)lysine. A substrate-binding site is contributed by Thr358.

Belongs to the class-II pyridoxal-phosphate-dependent aminotransferase family. BioF subfamily. As to quaternary structure, homodimer. Requires pyridoxal 5'-phosphate as cofactor.

The enzyme catalyses 6-carboxyhexanoyl-[ACP] + L-alanine + H(+) = (8S)-8-amino-7-oxononanoate + holo-[ACP] + CO2. It participates in cofactor biosynthesis; biotin biosynthesis. In terms of biological role, catalyzes the decarboxylative condensation of pimeloyl-[acyl-carrier protein] and L-alanine to produce 8-amino-7-oxononanoate (AON), [acyl-carrier protein], and carbon dioxide. This chain is Putative 8-amino-7-oxononanoate synthase (bioF), found in Bordetella parapertussis (strain 12822 / ATCC BAA-587 / NCTC 13253).